The chain runs to 218 residues: Ubiquitin-conjugating enzyme E2-24 kDa (218 aa).

The UBC core domain maps to 3 to 148 (SSKRRIETDV…IKEYIDKYAT (146 aa)). Cys85 (glycyl thioester intermediate) is an active-site residue. Residues 154 to 218 (QMFGGDNDSD…DDDYDEVANQ (65 aa)) are disordered. Acidic residues-rich tracts occupy residues 160 to 183 (NDSD…EDMD) and 192 to 218 (DSVD…VANQ).

This sequence belongs to the ubiquitin-conjugating enzyme family.

Its subcellular location is the cytoplasm. The enzyme catalyses S-ubiquitinyl-[E1 ubiquitin-activating enzyme]-L-cysteine + [E2 ubiquitin-conjugating enzyme]-L-cysteine = [E1 ubiquitin-activating enzyme]-L-cysteine + S-ubiquitinyl-[E2 ubiquitin-conjugating enzyme]-L-cysteine.. The protein operates within protein modification; protein ubiquitination. In terms of biological role, catalyzes the covalent attachment of ubiquitin to other proteins. Required for the adaptation to the presence of glucose in the growth medium; mediates the degradation of enzymes involved in gluconeogenesis when cells are shifted to glucose-containing medium. Required for proteasome-dependent catabolite degradation of fructose-1,6-bisphosphatase (FBP1). This is Ubiquitin-conjugating enzyme E2-24 kDa (UBC8) from Saccharomyces cerevisiae (strain ATCC 204508 / S288c) (Baker's yeast).